The sequence spans 872 residues: Alanine--tRNA ligase (872 aa).

Zn(2+) contacts are provided by His567, His571, Cys669, and His673.

This sequence belongs to the class-II aminoacyl-tRNA synthetase family. The cofactor is Zn(2+).

The protein localises to the cytoplasm. It catalyses the reaction tRNA(Ala) + L-alanine + ATP = L-alanyl-tRNA(Ala) + AMP + diphosphate. In terms of biological role, catalyzes the attachment of alanine to tRNA(Ala) in a two-step reaction: alanine is first activated by ATP to form Ala-AMP and then transferred to the acceptor end of tRNA(Ala). Also edits incorrectly charged Ser-tRNA(Ala) and Gly-tRNA(Ala) via its editing domain. The polypeptide is Alanine--tRNA ligase (Streptococcus gordonii (strain Challis / ATCC 35105 / BCRC 15272 / CH1 / DL1 / V288)).